A 642-amino-acid polypeptide reads, in one-letter code: Core protein VP4 (642 aa).

This sequence belongs to the orbivirus VP4 family.

It is found in the virion. Functionally, the VP4 protein is one of the five proteins (with VP1, VP3, VP6 and VP7) which form the inner capsid of the virus. The protein is Core protein VP4 (Segment-4) of African horse sickness virus (AHSV).